A 224-amino-acid polypeptide reads, in one-letter code: MSIASWPESERPREKLLSQGAATLNDSELLAIFLRTGIKGVNAVELARRLLQEFGSLSALLAAPLPAFKAKPGLGEAKYAQLMACTELARRALSEQMRLGDALSSPQQVRDYLRLSIGRREVETFVVIFLSAQNRLIEVEEVFKGTLTETRVYPREVLRRALRHNAAALIIAHNHPSGVSEPSSADRVLTDTLKRALELVDIRLLDHFVVTGGHAESFAERGWL.

Residues 102-224 (ALSSPQQVRD…AESFAERGWL (123 aa)) form the MPN domain. Zn(2+) contacts are provided by histidine 173, histidine 175, and aspartate 186. Residues 173–186 (HNHPSGVSEPSSAD) carry the JAMM motif motif.

Belongs to the UPF0758 family.

This Chromobacterium violaceum (strain ATCC 12472 / DSM 30191 / JCM 1249 / CCUG 213 / NBRC 12614 / NCIMB 9131 / NCTC 9757 / MK) protein is UPF0758 protein CV_3079.